A 188-amino-acid chain; its full sequence is MMHPVAGSNPAFCGPGKPSCLNEDAMRAADQFDLYSSQQNKYSHTVSHKPMVCQRQDPLNETHLQPTSGRNIEIKDELKKKKNLNRSGKRGRPSGTTKSAGYRTSTGRPLGTTKAAGFKTSPGRPLGTTKAAGYKVSPGRPPGSIKALSRLADLGYGCGTAAFPYPMMHSRVVHGLQETSGEVKPPSE.

The residue at position 37 (Ser37) is a Phosphoserine. A Glycyl lysine isopeptide (Lys-Gly) (interchain with G-Cter in SUMO2) cross-link involves residue Lys75. Positions 80–92 (KKKNLNRSGKRGR) are enriched in basic residues. Residues 80–141 (KKKNLNRSGK…AGYKVSPGRP (62 aa)) form a disordered region. Positions 94–107 (SGTTKSAGYRTSTG) are enriched in polar residues. Phosphoserine is present on residues Ser121 and Ser180. A Glycyl lysine isopeptide (Lys-Gly) (interchain with G-Cter in SUMO2) cross-link involves residue Lys184.

The protein belongs to the UPF0461 family.

The chain is UPF0461 protein C5orf24 homolog from Mus musculus (Mouse).